A 189-amino-acid polypeptide reads, in one-letter code: Tumor protein p53-inducible protein 11 (189 aa).

Over 1–63 (MAAKQPPPLM…FAVREPLGLR (63 aa)) the chain is Cytoplasmic. Position 14 is a phosphoserine (Ser14). Residues 64 to 84 (VWQFLSAMLFSSVAIMALALP) traverse the membrane as a helical segment. Over 85-108 (DQLYDAVFDGAEVTSKTPIRLYGG) the chain is Extracellular. A helical membrane pass occupies residues 109–129 (ALLSISLIMWNALYTAEKVII). Position 130 (Arg130) is a topological domain, cytoplasmic. A helical membrane pass occupies residues 131–151 (WTLLTEACYFGVQSLVVTATL). Residues 152–155 (AETG) are Extracellular-facing. Residues 156 to 176 (LMSLGTLLLLASRLLFVIVSI) traverse the membrane as a helical segment. At 177–189 (YYYYQVGRKPKKV) the chain is on the cytoplasmic side.

Its subcellular location is the membrane. The sequence is that of Tumor protein p53-inducible protein 11 (Tp53i11) from Rattus norvegicus (Rat).